Consider the following 254-residue polypeptide: Proteasome activator complex subunit 3 (254 aa).

Residue Ala-2 is modified to N-acetylalanine. Residues Ser-17 and Ser-24 each carry the phosphoserine modification. An N6-acetyllysine; by P300/CBP modification is found at Lys-195. Ser-247 is subject to Phosphoserine; by CHEK2.

Belongs to the PA28 family. In terms of assembly, homoheptamer; the stability of the heptamer is essential for the specific activation of the trypsine-like subunit and inhibition of the chymotrypsin-like and postglutamyl-preferring (PGPH) subunits of the proteasome. Interacts with p53/TP53, MDM2 and MAP3K3. Associates with the proteasome. Interacts with CCAR2. Interacts with PSME3IP1 (via C-terminus); the interaction is direct and promotes the association of PSME3 with the 20S proteasome. Interacts with COIL; the interaction is inhibited by PSME3IP1. Phosphorylated by MAP3K3. Phosphorylation at Ser-247 promotes its association with CCAR2. In terms of processing, acetylation at the major site Lys-195 is important for oligomerization and ability to degrade its target substrates. Deacetylated by SIRT1.

It is found in the nucleus. It localises to the cytoplasm. Its function is as follows. Subunit of the 11S REG-gamma (also called PA28-gamma) proteasome regulator, a doughnut-shaped homoheptamer which associates with the proteasome. 11S REG-gamma activates the trypsin-like catalytic subunit of the proteasome but inhibits the chymotrypsin-like and postglutamyl-preferring (PGPH) subunits. Facilitates the MDM2-p53/TP53 interaction which promotes ubiquitination- and MDM2-dependent proteasomal degradation of p53/TP53, limiting its accumulation and resulting in inhibited apoptosis after DNA damage. May also be involved in cell cycle regulation. Mediates CCAR2 and CHEK2-dependent SIRT1 inhibition. The polypeptide is Proteasome activator complex subunit 3 (PSME3) (Pongo abelii (Sumatran orangutan)).